A 164-amino-acid chain; its full sequence is Transcriptional repressor NrdR (164 aa).

A zinc finger spans residues 3-34; it reads CPFCRHEDSRVVDSRSLDDGSAIRRRRQCQAC. In terms of domain architecture, ATP-cone spans 46–136; that stretch reads LTVVKRSGVA…VYRDFESLDD (91 aa).

The protein belongs to the NrdR family. Requires Zn(2+) as cofactor.

In terms of biological role, negatively regulates transcription of bacterial ribonucleotide reductase nrd genes and operons by binding to NrdR-boxes. In Micrococcus luteus (strain ATCC 4698 / DSM 20030 / JCM 1464 / CCM 169 / CCUG 5858 / IAM 1056 / NBRC 3333 / NCIMB 9278 / NCTC 2665 / VKM Ac-2230) (Micrococcus lysodeikticus), this protein is Transcriptional repressor NrdR.